We begin with the raw amino-acid sequence, 296 residues long: Bifunctional protein FolD 1/3 (296 aa).

Residues 166 to 168, serine 191, and isoleucine 232 contribute to the NADP(+) site; that span reads GRS.

The protein belongs to the tetrahydrofolate dehydrogenase/cyclohydrolase family. As to quaternary structure, homodimer.

The enzyme catalyses (6R)-5,10-methylene-5,6,7,8-tetrahydrofolate + NADP(+) = (6R)-5,10-methenyltetrahydrofolate + NADPH. It carries out the reaction (6R)-5,10-methenyltetrahydrofolate + H2O = (6R)-10-formyltetrahydrofolate + H(+). Its pathway is one-carbon metabolism; tetrahydrofolate interconversion. Its function is as follows. Catalyzes the oxidation of 5,10-methylenetetrahydrofolate to 5,10-methenyltetrahydrofolate and then the hydrolysis of 5,10-methenyltetrahydrofolate to 10-formyltetrahydrofolate. This chain is Bifunctional protein FolD 1/3, found in Ruegeria pomeroyi (strain ATCC 700808 / DSM 15171 / DSS-3) (Silicibacter pomeroyi).